A 317-amino-acid chain; its full sequence is MLTFQQMILTLQAYWDRQGCALLQPIDLEVGAGTSHVHTFLRAIGPEPWRAAYVQPSRRPKDGRYGENPNRLQHYYQYQVVLKPAPENILELYLGSLEALGLDLKQNDIRFVEDDWENPTLGAWGLGWEVWLNGMEVTQFTYFQQVGGIDCKPITGEITYGIERLAMYLQKVENIYDLVWTEWQENGETRRLTYGDVYHQNEVEQSTYNFEHSNTEILFRHFAEHESEAKRLMGDTGEKAEGAQEKAAGTRLALPAYEQVLKAAHTFNLLDARGAISVTERAAYIGRIRNLSRQVAQAYYDSREALGFPMCKTEARA.

The protein belongs to the class-II aminoacyl-tRNA synthetase family. As to quaternary structure, tetramer of two alpha and two beta subunits.

The protein resides in the cytoplasm. The catalysed reaction is tRNA(Gly) + glycine + ATP = glycyl-tRNA(Gly) + AMP + diphosphate. The protein is Glycine--tRNA ligase alpha subunit of Cupriavidus metallidurans (strain ATCC 43123 / DSM 2839 / NBRC 102507 / CH34) (Ralstonia metallidurans).